A 249-amino-acid chain; its full sequence is ATP synthase subunit a, chloroplastic (249 aa).

5 helical membrane-spanning segments follow: residues 40-60 (QVLI…VLAI), 97-117 (VPFI…GALL), 136-156 (INTT…AGLS), 201-221 (LVVV…VMFL), and 222-242 (GLFT…AYIG).

This sequence belongs to the ATPase A chain family. In terms of assembly, F-type ATPases have 2 components, CF(1) - the catalytic core - and CF(0) - the membrane proton channel. CF(1) has five subunits: alpha(3), beta(3), gamma(1), delta(1), epsilon(1). CF(0) has four main subunits: a, b, b' and c.

It is found in the plastid. The protein localises to the chloroplast thylakoid membrane. Its function is as follows. Key component of the proton channel; it plays a direct role in the translocation of protons across the membrane. The polypeptide is ATP synthase subunit a, chloroplastic (Capsella bursa-pastoris (Shepherd's purse)).